The chain runs to 300 residues: Type II methyltransferase M.XycI (300 aa).

The tract at residues 109–129 is disordered; the sequence is RGYRAPDKKNPARAMDVRPDT. Basic and acidic residues predominate over residues 112–127; that stretch reads RAPDKKNPARAMDVRP.

Belongs to the N(4)/N(6)-methyltransferase family. N(4) subfamily.

The enzyme catalyses a 2'-deoxycytidine in DNA + S-adenosyl-L-methionine = an N(4)-methyl-2'-deoxycytidine in DNA + S-adenosyl-L-homocysteine + H(+). Its function is as follows. A beta subtype methylase, recognizes the double-stranded sequence 5'-CCCGGG-3', methylates C-2 on both strands, and protects the DNA from cleavage by the XcyI endonuclease. This Xanthomonas campestris pv. cyanopsidis protein is Type II methyltransferase M.XycI (xcyIM).